The chain runs to 744 residues: Cell surface receptor daf-4 (744 aa).

A signal peptide spans 1–31 (MNQKGTVRLKALVLICLPLFLIATPVPVAVT). At 48–253 (WANTLVSKVA…IALLILAYVG (206 aa)) the chain is on the extracellular side. N-linked (GlcNAc...) asparagine glycans are attached at residues Asn-60, Asn-134, and Asn-165. A helical membrane pass occupies residues 254–274 (WKFQQNKKEEIKKQQKIKFDM). The Cytoplasmic portion of the chain corresponds to 275–744 (EKTDALEAGN…PSGTFGTFTT (470 aa)). The Protein kinase domain occupies 306-603 (ITDFQLISKG…FARVWNHIMS (298 aa)). Residues 312-320 (ISKGRFGKV) and Lys-338 contribute to the ATP site. Asp-440 functions as the Proton acceptor in the catalytic mechanism. 2 disordered regions span residues 605–686 (PDSS…PEPE) and 724–744 (AGAD…TFTT). Residues 620-639 (RGVDDVEQSEKPEGIEEMQH) are compositionally biased toward basic and acidic residues. Residues 731 to 744 (STPTPSGTFGTFTT) are compositionally biased toward low complexity.

Belongs to the protein kinase superfamily. TKL Ser/Thr protein kinase family. TGFB receptor subfamily. May interact with daf-1 to regulate dauer larva development. Interacts with sma-10. As to expression, pharynx, intestine, hypodermis and body wall muscles in L1 through to adult stages. Also expressed in head neurons, ventral cord and tail neurons. Subset of head neurons show coexpression with daf-1 when dauer/nondauer decision is made.

Its subcellular location is the cell membrane. The catalysed reaction is L-threonyl-[receptor-protein] + ATP = O-phospho-L-threonyl-[receptor-protein] + ADP + H(+). It catalyses the reaction L-seryl-[receptor-protein] + ATP = O-phospho-L-seryl-[receptor-protein] + ADP + H(+). Functionally, involved in a TGF-beta pathway. May be a receptor for TGF-beta-like ligand daf-7. Controls the decision of whether or not larvae enter a developmentally arrested state, known as dauer, in response to environmental conditions. Regulates body size and male tail patterning. Involved in regulating entry into quiescence triggered by satiety. Involved in sensitivity to CO2 levels. The protein is Cell surface receptor daf-4 of Caenorhabditis elegans.